The primary structure comprises 510 residues: uncharacterized protein (510 aa).

This sequence to B.subtilis SpoVR.

This is an uncharacterized protein from Escherichia coli (strain K12).